The chain runs to 1851 residues: Chitin synthase (1851 aa).

Residues 1-21 are disordered; the sequence is MQYHQHQHQFPGPGPSHTSVY. At 1–108 the chain is on the cytoplasmic side; it reads MQYHQHQHQF…KDTLYNGFLQ (108 aa). The chain crosses the membrane as a helical span at residues 109–129; it reads VLKMITFVALFVTTLGSSILA. Over 130–168 the chain is Extracellular; it reads KLSLLVMAAGLGQAGHNISICPDKIPESPKNSVLISPKN. Asn-146 carries an N-linked (GlcNAc...) asparagine glycan. Residues 169–189 form a helical membrane-spanning segment; the sequence is AAKWAWALLLAICIPELLCFA. Residues 190-208 are Cytoplasmic-facing; the sequence is RSLHRSLFRKVRGPSFLQF. Residues 209-229 form a helical membrane-spanning segment; the sequence is LLVFTVESVHAFGLGALVFAI. Residues 230-234 are Extracellular-facing; the sequence is MPRGM. The helical transmembrane segment at 235 to 255 threads the bilayer; sequence VITMLQLGNSLCLIPSLLLPL. Over 256–261 the chain is Cytoplasmic; that stretch reads SRSRSR. A helical transmembrane segment spans residues 262–282; it reads WLPLLLLLDGSAILAQSSAAI. The Extracellular segment spans residues 283-291; it reads WRGSIPLER. A helical membrane pass occupies residues 292–312; that stretch reads FGFVFLCTSLISIAWWQNFVH. Over 313–337 the chain is Cytoplasmic; sequence PHSFLPATRFFAHYAAKLRECRSKT. A helical membrane pass occupies residues 338–358; that stretch reads FVVLSPWKCLIFTFCMFQFVP. Topologically, residues 359 to 544 are extracellular; that stretch reads PQIPFRELLQ…ELNQFTTAND (186 aa). Residues Asn-385 and Asn-435 are each glycosylated (N-linked (GlcNAc...) asparagine). A disordered region spans residues 432 to 522; that stretch reads LFRNGTRRPP…DADEQEEEEE (91 aa). Positions 442–454 are enriched in basic and acidic residues; sequence KKEEVKKNKMDSK. Residues 455–465 show a composition bias toward basic residues; that stretch reads KKTKKLKKKKG. A compositionally biased stretch (low complexity) spans 466–478; it reads GNNNATSTNSSEK. 2 N-linked (GlcNAc...) asparagine glycosylation sites follow: Asn-469 and Asn-474. The span at 513 to 522 shows a compositional bias: acidic residues; it reads DADEQEEEEE. Residues 545-565 form a helical membrane-spanning segment; that stretch reads ALWLVFVQAGSVLLCQLCAKF. Residues 566–573 lie on the Cytoplasmic side of the membrane; that stretch reads ACKVVMQR. A helical transmembrane segment spans residues 574 to 594; that stretch reads VGLALPVVLSIPFGILFLAYS. The Extracellular portion of the chain corresponds to 595–631; that stretch reads CRQKATNPCHLSEWMSKELFWQCPTRPFHWQRFFREQ. The helical transmembrane segment at 632–652 threads the bilayer; sequence PNLLWLCWWLSQCWITIHLWL. Topologically, residues 653–1124 are cytoplasmic; sequence PRQERLAKSE…VSIWYIAYQL (472 aa). Positions 693-718 are disordered; the sequence is SEDIDTEEEANEGGGEQEDGNSSTHT. Positions 696–711 are enriched in acidic residues; sequence IDTEEEANEGGGEQED. A helical membrane pass occupies residues 1125-1145; the sequence is VMLFSSVLGPGTIFLMIVGAI. Residues 1146-1154 lie on the Extracellular side of the membrane; it reads SISFNIDTR. The chain crosses the membrane as a helical span at residues 1155–1175; it reads LALLIVTTPVLCFCVCCLTCG. At 1176 to 1179 the chain is on the cytoplasmic side; the sequence is TETQ. A helical membrane pass occupies residues 1180–1200; that stretch reads LLLAQVIGALFAMLMTAVIVG. Over 1201-1209 the chain is Extracellular; the sequence is TSLQIQKDG. A helical transmembrane segment spans residues 1210 to 1230; the sequence is LLSPHSIFLFTVLGSWSFSAL. The Cytoplasmic segment spans residues 1231 to 1235; the sequence is LHPLE. A helical transmembrane segment spans residues 1236–1256; the sequence is FGCLLPCGLYFLAIPCMYMLL. Residues 1257–1461 lie on the Extracellular side of the membrane; the sequence is PVYSLCNLNT…QRGLNELRNT (205 aa). Asn-1274 carries an N-linked (GlcNAc...) asparagine glycan. The stretch at 1329–1383 forms a coiled coil; it reads CADETVEVRKLDENFRKIERKLQSLERRTNGQGNNAEEEGKEEEETGKSEQERKE. Residues 1350 to 1402 form a disordered region; the sequence is LQSLERRTNGQGNNAEEEGKEEEETGKSEQERKEGREEGKEEEGKMSKRKKEE. The segment covering 1364–1373 has biased composition (acidic residues); that stretch reads AEEEGKEEEE. Over residues 1374 to 1402 the composition is skewed to basic and acidic residues; sequence TGKSEQERKEGREEGKEEEGKMSKRKKEE. The helical transmembrane segment at 1462–1482 threads the bilayer; that stretch reads CCSAFFMVNIVFIIVVLVLQL. The Cytoplasmic portion of the chain corresponds to 1483 to 1527; sequence QKDCLHIEWPLGPLVNQTRVQCGGGGGRDFEGEEWIMSRLQLEPM. The chain crosses the membrane as a helical span at residues 1528-1548; sequence GFVFIVFFLIILFIQFLAMLF. Residues 1549–1851 lie on the Extracellular side of the membrane; that stretch reads HRFGTFTHII…FLGTTNKRAK (303 aa). The tract at residues 1626-1658 is disordered; that stretch reads GKRQQNAQIPPRCEKGGNERGEESPTSLPAPPV. Positions 1637 to 1648 are enriched in basic and acidic residues; sequence RCEKGGNERGEE. Asn-1660 is a glycosylation site (N-linked (GlcNAc...) asparagine). Positions 1765–1851 are disordered; it reads HSIFPSSSES…FLGTTNKRAK (87 aa). The segment covering 1781 to 1822 has biased composition (basic and acidic residues); the sequence is GGGRGRGREQERDKCLEGKKEKFRQRVEEGPARCHRLEELFG. A compositionally biased stretch (basic residues) spans 1823–1834; the sequence is KSRKGGPQKRGK.

Belongs to the chitin synthase family. Class IV subfamily. In terms of processing, may require proteolytic cleavage for activation.

The protein localises to the cell membrane. It carries out the reaction [(1-&gt;4)-N-acetyl-beta-D-glucosaminyl](n) + UDP-N-acetyl-alpha-D-glucosamine = [(1-&gt;4)-N-acetyl-beta-D-glucosaminyl](n+1) + UDP + H(+). In terms of biological role, required for the synthesis of chitin. This Meloidogyne artiellia (British root-knot nematode) protein is Chitin synthase.